The sequence spans 428 residues: UPF0597 protein BF3560 (428 aa).

It belongs to the UPF0597 family.

The polypeptide is UPF0597 protein BF3560 (Bacteroides fragilis (strain ATCC 25285 / DSM 2151 / CCUG 4856 / JCM 11019 / LMG 10263 / NCTC 9343 / Onslow / VPI 2553 / EN-2)).